The sequence spans 347 residues: S-adenosylmethionine:tRNA ribosyltransferase-isomerase (347 aa).

It belongs to the QueA family. Monomer.

It is found in the cytoplasm. The enzyme catalyses 7-aminomethyl-7-carbaguanosine(34) in tRNA + S-adenosyl-L-methionine = epoxyqueuosine(34) in tRNA + adenine + L-methionine + 2 H(+). It functions in the pathway tRNA modification; tRNA-queuosine biosynthesis. In terms of biological role, transfers and isomerizes the ribose moiety from AdoMet to the 7-aminomethyl group of 7-deazaguanine (preQ1-tRNA) to give epoxyqueuosine (oQ-tRNA). The chain is S-adenosylmethionine:tRNA ribosyltransferase-isomerase from Exiguobacterium sibiricum (strain DSM 17290 / CCUG 55495 / CIP 109462 / JCM 13490 / 255-15).